The primary structure comprises 191 residues: Xanthine phosphoribosyltransferase (191 aa).

Residues Leu-20 and Asn-27 each coordinate xanthine. 128 to 132 is a 5-phospho-alpha-D-ribose 1-diphosphate binding site; that stretch reads ANGQA. Lys-156 is a binding site for xanthine.

It belongs to the purine/pyrimidine phosphoribosyltransferase family. Xpt subfamily. In terms of assembly, homodimer.

Its subcellular location is the cytoplasm. It carries out the reaction XMP + diphosphate = xanthine + 5-phospho-alpha-D-ribose 1-diphosphate. It functions in the pathway purine metabolism; XMP biosynthesis via salvage pathway; XMP from xanthine: step 1/1. Converts the preformed base xanthine, a product of nucleic acid breakdown, to xanthosine 5'-monophosphate (XMP), so it can be reused for RNA or DNA synthesis. The protein is Xanthine phosphoribosyltransferase of Limosilactobacillus reuteri (strain DSM 20016) (Lactobacillus reuteri).